The following is a 238-amino-acid chain: 1-(5-phosphoribosyl)-5-[(5-phosphoribosylamino)methylideneamino] imidazole-4-carboxamide isomerase (238 aa).

Residue D8 is the Proton acceptor of the active site. D129 acts as the Proton donor in catalysis.

This sequence belongs to the HisA/HisF family.

It is found in the cytoplasm. The catalysed reaction is 1-(5-phospho-beta-D-ribosyl)-5-[(5-phospho-beta-D-ribosylamino)methylideneamino]imidazole-4-carboxamide = 5-[(5-phospho-1-deoxy-D-ribulos-1-ylimino)methylamino]-1-(5-phospho-beta-D-ribosyl)imidazole-4-carboxamide. It functions in the pathway amino-acid biosynthesis; L-histidine biosynthesis; L-histidine from 5-phospho-alpha-D-ribose 1-diphosphate: step 4/9. This Anaeromyxobacter sp. (strain Fw109-5) protein is 1-(5-phosphoribosyl)-5-[(5-phosphoribosylamino)methylideneamino] imidazole-4-carboxamide isomerase.